Consider the following 132-residue polypeptide: Small ribosomal subunit protein uS8 (132 aa).

It belongs to the universal ribosomal protein uS8 family. Part of the 30S ribosomal subunit. Contacts proteins S5 and S12.

Functionally, one of the primary rRNA binding proteins, it binds directly to 16S rRNA central domain where it helps coordinate assembly of the platform of the 30S subunit. The protein is Small ribosomal subunit protein uS8 of Streptomyces coelicolor (strain ATCC BAA-471 / A3(2) / M145).